A 719-amino-acid polypeptide reads, in one-letter code: Phosphoribosylformylglycinamidine synthase subunit PurL (719 aa).

Residue H47 is part of the active site. Positions 50 and 89 each coordinate ATP. Residue E91 participates in Mg(2+) binding. Substrate-binding positions include 92-95 and R114; that span reads SHNH. The active-site Proton acceptor is H93. D115 lines the Mg(2+) pocket. Residue Q238 participates in substrate binding. Residue D266 coordinates Mg(2+). Residue 310–312 coordinates substrate; sequence ESQ. 2 residues coordinate ATP: D488 and G525. N526 is a binding site for Mg(2+). S528 contributes to the substrate binding site.

The protein belongs to the FGAMS family. Monomer. Part of the FGAM synthase complex composed of 1 PurL, 1 PurQ and 2 PurS subunits.

Its subcellular location is the cytoplasm. It carries out the reaction N(2)-formyl-N(1)-(5-phospho-beta-D-ribosyl)glycinamide + L-glutamine + ATP + H2O = 2-formamido-N(1)-(5-O-phospho-beta-D-ribosyl)acetamidine + L-glutamate + ADP + phosphate + H(+). It functions in the pathway purine metabolism; IMP biosynthesis via de novo pathway; 5-amino-1-(5-phospho-D-ribosyl)imidazole from N(2)-formyl-N(1)-(5-phospho-D-ribosyl)glycinamide: step 1/2. Its function is as follows. Part of the phosphoribosylformylglycinamidine synthase complex involved in the purines biosynthetic pathway. Catalyzes the ATP-dependent conversion of formylglycinamide ribonucleotide (FGAR) and glutamine to yield formylglycinamidine ribonucleotide (FGAM) and glutamate. The FGAM synthase complex is composed of three subunits. PurQ produces an ammonia molecule by converting glutamine to glutamate. PurL transfers the ammonia molecule to FGAR to form FGAM in an ATP-dependent manner. PurS interacts with PurQ and PurL and is thought to assist in the transfer of the ammonia molecule from PurQ to PurL. The chain is Phosphoribosylformylglycinamidine synthase subunit PurL from Cereibacter sphaeroides (strain ATCC 17025 / ATH 2.4.3) (Rhodobacter sphaeroides).